The primary structure comprises 51 residues: Insulin (51 aa).

Disulfide bonds link cysteine 7-cysteine 37, cysteine 19-cysteine 50, and cysteine 36-cysteine 41.

The protein belongs to the insulin family. In terms of assembly, heterodimer of a B chain and an A chain linked by two disulfide bonds.

It localises to the secreted. Its function is as follows. Insulin decreases blood glucose concentration. It increases cell permeability to monosaccharides, amino acids and fatty acids. It accelerates glycolysis, the pentose phosphate cycle, and glycogen synthesis in liver. The chain is Insulin (INS) from Alligator mississippiensis (American alligator).